We begin with the raw amino-acid sequence, 299 residues long: 4-diphosphocytidyl-2-C-methyl-D-erythritol kinase (299 aa).

The active site involves Lys-33. Residue 115–125 coordinates ATP; it reads PLASGLGGGSS. Residue Asp-154 is part of the active site.

Belongs to the GHMP kinase family. IspE subfamily.

The enzyme catalyses 4-CDP-2-C-methyl-D-erythritol + ATP = 4-CDP-2-C-methyl-D-erythritol 2-phosphate + ADP + H(+). The protein operates within isoprenoid biosynthesis; isopentenyl diphosphate biosynthesis via DXP pathway; isopentenyl diphosphate from 1-deoxy-D-xylulose 5-phosphate: step 3/6. Its function is as follows. Catalyzes the phosphorylation of the position 2 hydroxy group of 4-diphosphocytidyl-2C-methyl-D-erythritol. This Deinococcus geothermalis (strain DSM 11300 / CIP 105573 / AG-3a) protein is 4-diphosphocytidyl-2-C-methyl-D-erythritol kinase.